The sequence spans 345 residues: S-adenosylmethionine:tRNA ribosyltransferase-isomerase (345 aa).

The protein belongs to the QueA family. Monomer.

The protein resides in the cytoplasm. The catalysed reaction is 7-aminomethyl-7-carbaguanosine(34) in tRNA + S-adenosyl-L-methionine = epoxyqueuosine(34) in tRNA + adenine + L-methionine + 2 H(+). It functions in the pathway tRNA modification; tRNA-queuosine biosynthesis. Transfers and isomerizes the ribose moiety from AdoMet to the 7-aminomethyl group of 7-deazaguanine (preQ1-tRNA) to give epoxyqueuosine (oQ-tRNA). The chain is S-adenosylmethionine:tRNA ribosyltransferase-isomerase from Shewanella halifaxensis (strain HAW-EB4).